We begin with the raw amino-acid sequence, 152 residues long: Superoxide dismutase [Cu-Zn] 1 (152 aa).

Residues histidine 45, histidine 47, and histidine 62 each contribute to the Cu cation site. A disulfide bridge links cysteine 56 with cysteine 145. Histidine 62, histidine 70, histidine 79, and aspartate 82 together coordinate Zn(2+). Histidine 119 lines the Cu cation pocket.

The protein belongs to the Cu-Zn superoxide dismutase family. Homodimer. Interacts with DJ1A and CCS. Requires Cu cation as cofactor. Zn(2+) serves as cofactor. In terms of tissue distribution, expressed in leaves (at protein level). The spatial localization is regulated by miR398-mediated silencing. Mostly present in flowers, old rosette leaves and inflorescence, and, to a lower extent, in cauline leaves, stems and roots.

It localises to the cytoplasm. Its subcellular location is the cytosol. The protein localises to the nucleus. It catalyses the reaction 2 superoxide + 2 H(+) = H2O2 + O2. Functionally, destroys radicals which are normally produced within the cells and which are toxic to biological systems. The chain is Superoxide dismutase [Cu-Zn] 1 (CSD1) from Arabidopsis thaliana (Mouse-ear cress).